The following is a 290-amino-acid chain: Energy-coupling factor transporter ATP-binding protein EcfA2 (290 aa).

An ABC transporter domain is found at Glu6–Ser246. An ATP-binding site is contributed by Gly40 to Ser47.

Belongs to the ABC transporter superfamily. Energy-coupling factor EcfA family. Forms a stable energy-coupling factor (ECF) transporter complex composed of 2 membrane-embedded substrate-binding proteins (S component), 2 ATP-binding proteins (A component) and 2 transmembrane proteins (T component).

It localises to the cell membrane. In terms of biological role, ATP-binding (A) component of a common energy-coupling factor (ECF) ABC-transporter complex. Unlike classic ABC transporters this ECF transporter provides the energy necessary to transport a number of different substrates. The polypeptide is Energy-coupling factor transporter ATP-binding protein EcfA2 (Geobacillus kaustophilus (strain HTA426)).